Reading from the N-terminus, the 456-residue chain is RUN domain-containing protein 3B (456 aa).

The disordered stretch occupies residues 1 to 24; that stretch reads MASRSLGGLSGIRGGGGGGGKKSL. Over residues 8-21 the composition is skewed to gly residues; the sequence is GLSGIRGGGGGGGK. R13 is modified (omega-N-methylarginine). One can recognise an RUN domain in the interval 57-189; the sequence is DDSSPEFNNF…IDFSFCLKGE (133 aa). Residues S215 and S216 each carry the phosphoserine modification. The interval 216 to 237 is disordered; the sequence is SDEEELRTLGSSGSESSTPENV. Positions 224–235 are enriched in polar residues; that stretch reads LGSSGSESSTPE. The stretch at 300 to 325 forms a coiled coil; the sequence is AHKLEKEQLEYIIVELQDQLTVLKNN. Residues 382 to 405 show a composition bias toward polar residues; sequence SLSQTSLDPGQSQEGDGKQDTLNV. Residues 382–411 are disordered; sequence SLSQTSLDPGQSQEGDGKQDTLNVMSEGKE.

The protein belongs to the RUNDC3 family. In terms of assembly, interacts with RAP2A.

In Pongo abelii (Sumatran orangutan), this protein is RUN domain-containing protein 3B (RUNDC3B).